Here is a 43-residue protein sequence, read N- to C-terminus: Protein PsbN (43 aa).

A helical membrane pass occupies residues 7–27; the sequence is FVVGILVALVLITAFAVYTAF.

This sequence belongs to the PsbN family.

It localises to the cell inner membrane. In terms of biological role, may play a role in photosystem I and II biogenesis. This chain is Protein PsbN, found in Gloeobacter violaceus (strain ATCC 29082 / PCC 7421).